Here is a 439-residue protein sequence, read N- to C-terminus: Xylose isomerase (439 aa).

Catalysis depends on residues histidine 100 and aspartate 103. The Mg(2+) site is built by glutamate 231, glutamate 267, histidine 270, aspartate 295, aspartate 306, aspartate 308, and aspartate 338.

The protein belongs to the xylose isomerase family. As to quaternary structure, homotetramer. Mg(2+) is required as a cofactor.

It is found in the cytoplasm. It carries out the reaction alpha-D-xylose = alpha-D-xylulofuranose. This Rhodopirellula baltica (strain DSM 10527 / NCIMB 13988 / SH1) protein is Xylose isomerase.